We begin with the raw amino-acid sequence, 272 residues long: Shikimate dehydrogenase (NADP(+)) (272 aa).

Residues Ser-14–Ser-16 and Thr-61 contribute to the shikimate site. The active-site Proton acceptor is the Lys-65. Glu-77 provides a ligand contact to NADP(+). 2 residues coordinate shikimate: Asn-86 and Asp-102. NADP(+) contacts are provided by residues Gly-126 to Ala-130, Asn-149 to Lys-154, and Met-212. Position 214 (Tyr-214) interacts with shikimate. An NADP(+)-binding site is contributed by Gly-237.

It belongs to the shikimate dehydrogenase family. Homodimer.

The enzyme catalyses shikimate + NADP(+) = 3-dehydroshikimate + NADPH + H(+). Its pathway is metabolic intermediate biosynthesis; chorismate biosynthesis; chorismate from D-erythrose 4-phosphate and phosphoenolpyruvate: step 4/7. Involved in the biosynthesis of the chorismate, which leads to the biosynthesis of aromatic amino acids. Catalyzes the reversible NADPH linked reduction of 3-dehydroshikimate (DHSA) to yield shikimate (SA). This is Shikimate dehydrogenase (NADP(+)) from Glaesserella parasuis serovar 5 (strain SH0165) (Haemophilus parasuis).